The sequence spans 213 residues: Phosphoheptose isomerase (213 aa).

Residues 50 to 208 (MAETFEGGGR…IDLVERMLGY (159 aa)) form the SIS domain. Substrate is bound at residue 65 to 67 (NGG). Zn(2+)-binding residues include H74 and E78. Residues E78, 109 to 110 (ND), 135 to 137 (STS), S140, and Q188 contribute to the substrate site. Zn(2+)-binding residues include Q188 and H196.

It belongs to the SIS family. GmhA subfamily. Zn(2+) is required as a cofactor.

It is found in the cytoplasm. It catalyses the reaction 2 D-sedoheptulose 7-phosphate = D-glycero-alpha-D-manno-heptose 7-phosphate + D-glycero-beta-D-manno-heptose 7-phosphate. It functions in the pathway carbohydrate biosynthesis; D-glycero-D-manno-heptose 7-phosphate biosynthesis; D-glycero-alpha-D-manno-heptose 7-phosphate and D-glycero-beta-D-manno-heptose 7-phosphate from sedoheptulose 7-phosphate: step 1/1. Functionally, catalyzes the isomerization of sedoheptulose 7-phosphate in D-glycero-D-manno-heptose 7-phosphate. The chain is Phosphoheptose isomerase from Chlorobium phaeovibrioides (strain DSM 265 / 1930) (Prosthecochloris vibrioformis (strain DSM 265)).